A 155-amino-acid chain; its full sequence is Ribosomal RNA large subunit methyltransferase H (155 aa).

Residues Leu73, Gly104, and 123–128 (LSPLTL) each bind S-adenosyl-L-methionine.

This sequence belongs to the RNA methyltransferase RlmH family. Homodimer.

The protein localises to the cytoplasm. The catalysed reaction is pseudouridine(1915) in 23S rRNA + S-adenosyl-L-methionine = N(3)-methylpseudouridine(1915) in 23S rRNA + S-adenosyl-L-homocysteine + H(+). In terms of biological role, specifically methylates the pseudouridine at position 1915 (m3Psi1915) in 23S rRNA. This Pseudomonas putida (strain ATCC 700007 / DSM 6899 / JCM 31910 / BCRC 17059 / LMG 24140 / F1) protein is Ribosomal RNA large subunit methyltransferase H.